Consider the following 1099-residue polypeptide: Solute carrier family 38 member 10 (1099 aa).

Transmembrane regions (helical) follow at residues 9–31, 36–58, 84–104, 123–143, 153–173, 229–249, 272–292, 323–343, 345–365, and 378–398; these read WGLVTNVVNSIVGVSVLTMPFCF, IVLGALLLVFCSWMTHQSCMFLV, LVETSMIGLMLGSCITFYVVI, TFRVFLLFAVSLCIVLPLSLQ, FSAMALLFYTVFMFVIVLSSF, IFASSLNVVTAFYVMVGFFGY, MIRVGFVMSVAVGFPMMILPC, VLTLSVVFGTMVGGVMIPNVE, ILGFTGATMGSLICFICPALI, and VVLWVGLGILVVSTLTTLSVS. 2 disordered regions span residues 440-679 and 720-1047; these read DSQE…EEAG and EIRQ…LAPK. At serine 441 the chain carries Phosphoserine. 5 stretches are compositionally biased toward basic and acidic residues: residues 441–454, 493–508, 517–528, 544–561, and 586–599; these read SQEKLKPAEDKEVL, EAHRHEPPIPHDKVVV, PEEKKPPPKLPD, ESEKKQDPERGEEGKRPE, and PRKEDSRPGNRDLH. Phosphoserine is present on residues serine 607 and serine 635. Composition is skewed to basic and acidic residues over residues 653 to 663, 720 to 735, and 749 to 766; these read EAAEQREKNEA, EIRQQRQEGEEDKPKP, and GQEEEAEHAGAPDEHAGE. The stretch at 698 to 734 forms a coiled coil; that stretch reads VQQKRLLDQQEKLLAVIEEQHKEIRQQRQEGEEDKPK. Threonine 767 is subject to Phosphothreonine. 5 stretches are compositionally biased toward basic and acidic residues: residues 793–802, 852–894, 917–928, 957–969, and 1010–1022; these read KGQHPLEEVK, EPVH…ETGK, EDSHSKSRHSEP, KSQDSHPEVRSEG, and QKPENAKPNRDLK. Serine 886 is subject to Phosphoserine.

Belongs to the amino acid/polyamine transporter 2 family. As to expression, only expressed in the pituitary, adrenal gland, stomach and in the upper gastrointestinal tract.

It localises to the membrane. It carries out the reaction L-glutamate(out) = L-glutamate(in). It catalyses the reaction L-glutamine(out) = L-glutamine(in). The catalysed reaction is L-alanine(in) = L-alanine(out). The enzyme catalyses L-serine(in) = L-serine(out). It carries out the reaction L-leucine(in) = L-leucine(out). Facilitates bidirectional transport of amino acids. May act as a glutamate sensor that regulates glutamate-glutamine cycle and mTOR signaling in the brain. The transport mechanism remains to be elucidated. The chain is Solute carrier family 38 member 10 from Rattus norvegicus (Rat).